The chain runs to 173 residues: dCTP deaminase (173 aa).

DCTP contacts are provided by residues 97-102 (RSSFAR) and aspartate 113. The active-site Proton donor/acceptor is glutamate 123. The dCTP site is built by tyrosine 155 and glutamine 162.

It belongs to the dCTP deaminase family. Homotrimer.

The enzyme catalyses dCTP + H2O + H(+) = dUTP + NH4(+). It participates in pyrimidine metabolism; dUMP biosynthesis; dUMP from dCTP (dUTP route): step 1/2. In terms of biological role, catalyzes the deamination of dCTP to dUTP. The sequence is that of dCTP deaminase from Acidianus ambivalens (Desulfurolobus ambivalens).